The following is a 382-amino-acid chain: Pyrimidine monooxygenase RutA (382 aa).

Residues 68–69, N134, E143, 159–160, and S209 contribute to the FMN site; these read IK and RY.

The protein belongs to the NtaA/SnaA/DszA monooxygenase family. RutA subfamily.

The catalysed reaction is uracil + FMNH2 + NADH + O2 = (Z)-3-ureidoacrylate + FMN + NAD(+) + H2O + H(+). The enzyme catalyses thymine + FMNH2 + NADH + O2 = (Z)-2-methylureidoacrylate + FMN + NAD(+) + H2O + H(+). Catalyzes the pyrimidine ring opening between N-3 and C-4 by an unusual flavin hydroperoxide-catalyzed mechanism, adding oxygen atoms in the process to yield ureidoacrylate peracid, that immediately reacts with FMN forming ureidoacrylate and FMN-N(5)-oxide. The FMN-N(5)-oxide reacts spontaneously with NADH to produce FMN. Requires the flavin reductase RutF to regenerate FMN in vivo. This is Pyrimidine monooxygenase RutA from Escherichia coli O55:H7 (strain CB9615 / EPEC).